The sequence spans 257 residues: Aspartate/glutamate leucyltransferase (257 aa).

This sequence belongs to the R-transferase family. Bpt subfamily.

The protein localises to the cytoplasm. It catalyses the reaction N-terminal L-glutamyl-[protein] + L-leucyl-tRNA(Leu) = N-terminal L-leucyl-L-glutamyl-[protein] + tRNA(Leu) + H(+). The catalysed reaction is N-terminal L-aspartyl-[protein] + L-leucyl-tRNA(Leu) = N-terminal L-leucyl-L-aspartyl-[protein] + tRNA(Leu) + H(+). In terms of biological role, functions in the N-end rule pathway of protein degradation where it conjugates Leu from its aminoacyl-tRNA to the N-termini of proteins containing an N-terminal aspartate or glutamate. This chain is Aspartate/glutamate leucyltransferase, found in Rhodopseudomonas palustris (strain BisB5).